Reading from the N-terminus, the 675-residue chain is Potassium-transporting ATPase ATP-binding subunit (675 aa).

4 helical membrane-spanning segments follow: residues isoleucine 34–isoleucine 54, leucine 65–phenylalanine 85, isoleucine 216–leucine 236, and leucine 245–glycine 265. The 4-aspartylphosphate intermediate role is filled by aspartate 304. ATP-binding positions include aspartate 341, glutamate 345, phenylalanine 372–serine 379, and lysine 390. Residues aspartate 513 and aspartate 517 each coordinate Mg(2+). Helical transmembrane passes span alanine 569 to methionine 591, alanine 611 to methionine 631, and isoleucine 644 to isoleucine 664.

This sequence belongs to the cation transport ATPase (P-type) (TC 3.A.3) family. Type IA subfamily. In terms of assembly, the system is composed of three essential subunits: KdpA, KdpB and KdpC.

Its subcellular location is the cell membrane. It catalyses the reaction K(+)(out) + ATP + H2O = K(+)(in) + ADP + phosphate + H(+). Functionally, part of the high-affinity ATP-driven potassium transport (or Kdp) system, which catalyzes the hydrolysis of ATP coupled with the electrogenic transport of potassium into the cytoplasm. This subunit is responsible for energy coupling to the transport system and for the release of the potassium ions to the cytoplasm. This Staphylococcus aureus (strain Newman) protein is Potassium-transporting ATPase ATP-binding subunit.